We begin with the raw amino-acid sequence, 196 residues long: Sulfur-rich protein (196 aa).

Transmembrane regions (helical) follow at residues 34–54 (VTAG…LIGW), 76–96 (ITLL…MFIF), and 105–125 (FWLI…SLCF).

Its subcellular location is the membrane. The chain is Sulfur-rich protein (srp) from Chlamydia pneumoniae (Chlamydophila pneumoniae).